The primary structure comprises 154 residues: Lipoprotein signal peptidase (154 aa).

Helical transmembrane passes span 55-75 (GHMWFFYLITVIVIGIIIYIM) and 84-104 (LFSISLAFILGGAIGNFIDRV). Active-site residues include D111 and D129. Residues 124 to 144 (IFNVADASLSVGVVLMLVYVF) form a helical membrane-spanning segment.

The protein belongs to the peptidase A8 family.

It localises to the cell membrane. It carries out the reaction Release of signal peptides from bacterial membrane prolipoproteins. Hydrolyzes -Xaa-Yaa-Zaa-|-(S,diacylglyceryl)Cys-, in which Xaa is hydrophobic (preferably Leu), and Yaa (Ala or Ser) and Zaa (Gly or Ala) have small, neutral side chains.. It participates in protein modification; lipoprotein biosynthesis (signal peptide cleavage). In terms of biological role, this protein specifically catalyzes the removal of signal peptides from prolipoproteins. The sequence is that of Lipoprotein signal peptidase from Listeria welshimeri serovar 6b (strain ATCC 35897 / DSM 20650 / CCUG 15529 / CIP 8149 / NCTC 11857 / SLCC 5334 / V8).